A 751-amino-acid polypeptide reads, in one-letter code: SKI family transcriptional corepressor 1 homolog-B (751 aa).

5 disordered regions span residues 1–30 (MESI…SGPP), 234–267 (SRKR…PHKT), 386–434 (LDVS…GIPP), 459–569 (YGNR…HGNK), and 600–635 (QRET…SEER). Polar residues-rich tracts occupy residues 14–27 (SSCS…QSYS) and 244–259 (SESS…TQGE). Residues 416–428 (RNEEDKSGDESRS) are compositionally biased toward basic and acidic residues. The segment covering 479-491 (SESSSYRSVSPDV) has biased composition (low complexity). The segment covering 539-558 (QENTQMHTLNDLHSTNSSET) has biased composition (polar residues). Basic and acidic residues-rich tracts occupy residues 559–569 (RPSDMESHGNK), 603–612 (TSVKDVHEEE), and 620–635 (MEPK…SEER). Positions 666–704 (SMAKEELQKQLVEQVELRKKLEREFQNLKDSFQDQMKRE) form a coiled coil.

This sequence belongs to the SKI family.

Its subcellular location is the nucleus. In terms of biological role, may inhibit BMP signaling. This is SKI family transcriptional corepressor 1 homolog-B (skor1b) from Danio rerio (Zebrafish).